Consider the following 159-residue polypeptide: Nucleotide-binding protein PSPPH_4093 (159 aa).

Belongs to the YajQ family.

Functionally, nucleotide-binding protein. The chain is Nucleotide-binding protein PSPPH_4093 from Pseudomonas savastanoi pv. phaseolicola (strain 1448A / Race 6) (Pseudomonas syringae pv. phaseolicola (strain 1448A / Race 6)).